The chain runs to 602 residues: Putative ankyrin repeat protein L100 (602 aa).

11 ANK repeats span residues 133-162 (VLFY…SLIS), 269-294 (YLEK…KKSI), 295-324 (NKER…NINL), 325-354 (LKGT…DIHI), 355-384 (RDNA…DIHT), 386-414 (SSQA…DIRS), 416-444 (ENIL…DVLS), 445-474 (KGVE…DICA), 476-504 (DNEA…DVKA), 506-534 (DNEA…DITA), and 536-566 (NNEA…DVHA).

This is Putative ankyrin repeat protein L100 from Acanthamoeba polyphaga mimivirus (APMV).